Consider the following 528-residue polypeptide: Tyrosine-protein kinase transforming protein Yes (528 aa).

A compositionally biased stretch (basic and acidic residues) spans 1–12 (DKGPAMKYRTDN). A disordered region spans residues 1-35 (DKGPAMKYRTDNTPEPISSHVSHYGSDSSQATQSP). Over residues 18–29 (SSHVSHYGSDSS) the composition is skewed to low complexity. The region spanning 81–142 (GGGTVFVALY…PSNYVAPADS (62 aa)) is the SH3 domain. Positions 148–245 (WYFGKMGRKD…GLCHKLTTVC (98 aa)) constitute an SH2 domain. The region spanning 267–520 (LRLEVKLGQG…YIQSFLEDYF (254 aa)) is the Protein kinase domain. Residues 273–281 (LGQGCFGEV) and lysine 295 each bind ATP. Aspartate 386 serves as the catalytic Proton acceptor. Tyrosine 416 carries the post-translational modification Phosphotyrosine; by autocatalysis.

The protein belongs to the protein kinase superfamily. Tyr protein kinase family. SRC subfamily.

The catalysed reaction is L-tyrosyl-[protein] + ATP = O-phospho-L-tyrosyl-[protein] + ADP + H(+). The chain is Tyrosine-protein kinase transforming protein Yes (V-YES) from Galliformes (Y73SV).